The primary structure comprises 316 residues: Acetyl-coenzyme A carboxylase carboxyl transferase subunit alpha (316 aa).

The 255-residue stretch at 36-290 (LLEERLARLR…KEALLKALEE (255 aa)) folds into the CoA carboxyltransferase C-terminal domain.

The protein belongs to the AccA family. As to quaternary structure, acetyl-CoA carboxylase is a heterohexamer composed of biotin carboxyl carrier protein (AccB), biotin carboxylase (AccC) and two subunits each of ACCase subunit alpha (AccA) and ACCase subunit beta (AccD).

The protein localises to the cytoplasm. It carries out the reaction N(6)-carboxybiotinyl-L-lysyl-[protein] + acetyl-CoA = N(6)-biotinyl-L-lysyl-[protein] + malonyl-CoA. It participates in lipid metabolism; malonyl-CoA biosynthesis; malonyl-CoA from acetyl-CoA: step 1/1. Component of the acetyl coenzyme A carboxylase (ACC) complex. First, biotin carboxylase catalyzes the carboxylation of biotin on its carrier protein (BCCP) and then the CO(2) group is transferred by the carboxyltransferase to acetyl-CoA to form malonyl-CoA. In Thermus thermophilus (strain ATCC 27634 / DSM 579 / HB8), this protein is Acetyl-coenzyme A carboxylase carboxyl transferase subunit alpha.